A 262-amino-acid polypeptide reads, in one-letter code: Hydroxyethylthiazole kinase (262 aa).

Methionine 50 serves as a coordination point for substrate. ATP is bound by residues arginine 125 and threonine 171. Glycine 198 lines the substrate pocket.

The protein belongs to the Thz kinase family. Requires Mg(2+) as cofactor.

The enzyme catalyses 5-(2-hydroxyethyl)-4-methylthiazole + ATP = 4-methyl-5-(2-phosphooxyethyl)-thiazole + ADP + H(+). The protein operates within cofactor biosynthesis; thiamine diphosphate biosynthesis; 4-methyl-5-(2-phosphoethyl)-thiazole from 5-(2-hydroxyethyl)-4-methylthiazole: step 1/1. Catalyzes the phosphorylation of the hydroxyl group of 4-methyl-5-beta-hydroxyethylthiazole (THZ). In Shigella boydii serotype 18 (strain CDC 3083-94 / BS512), this protein is Hydroxyethylthiazole kinase.